The sequence spans 319 residues: Transmembrane and ubiquitin-like domain-containing protein 2 (319 aa).

A helical membrane pass occupies residues 36–56; it reads VMVVAGVVVLTLALVLAWLST. 2 disordered regions span residues 88–130 and 146–165; these read VNQG…GDME and QAGL…DSTC. The span at 95–111 shows a compositional bias: basic and acidic residues; sequence PTEHPHPSGGSDDKAEE. The Ubiquitin-like domain occupies 173–246; it reads INVRLKFLND…IHCHRSPPGA (74 aa). The next 2 membrane-spanning stretches (helical) occupy residues 264 to 284 and 293 to 313; these read LGVN…GVVW and FFTA…SFLV.

Its subcellular location is the membrane. This Rattus norvegicus (Rat) protein is Transmembrane and ubiquitin-like domain-containing protein 2 (Tmub2).